The chain runs to 137 residues: Large ribosomal subunit protein uL16 (137 aa).

The protein belongs to the universal ribosomal protein uL16 family. Part of the 50S ribosomal subunit.

Binds 23S rRNA and is also seen to make contacts with the A and possibly P site tRNAs. In Pseudomonas syringae pv. tomato (strain ATCC BAA-871 / DC3000), this protein is Large ribosomal subunit protein uL16.